The primary structure comprises 152 residues: Superoxide dismutase [Cu-Zn] 1 (152 aa).

Positions 45, 47, and 62 each coordinate Cu cation. Residues C56 and C145 are joined by a disulfide bond. 4 residues coordinate Zn(2+): H62, H70, H79, and D82. H119 serves as a coordination point for Cu cation.

Belongs to the Cu-Zn superoxide dismutase family. In terms of assembly, homodimer. Interacts with DJ1A and CCS. Cu cation is required as a cofactor. It depends on Zn(2+) as a cofactor. In terms of tissue distribution, expressed in leaves (at protein level). The spatial localization is regulated by miR398-mediated silencing. Mostly present in flowers, old rosette leaves and inflorescence, and, to a lower extent, in cauline leaves, stems and roots.

The protein localises to the cytoplasm. It localises to the cytosol. It is found in the nucleus. It carries out the reaction 2 superoxide + 2 H(+) = H2O2 + O2. Destroys radicals which are normally produced within the cells and which are toxic to biological systems. This is Superoxide dismutase [Cu-Zn] 1 (CSD1) from Arabidopsis thaliana (Mouse-ear cress).